Here is a 418-residue protein sequence, read N- to C-terminus: Exodeoxyribonuclease 7 large subunit (418 aa).

Belongs to the XseA family. In terms of assembly, heterooligomer composed of large and small subunits.

It localises to the cytoplasm. The enzyme catalyses Exonucleolytic cleavage in either 5'- to 3'- or 3'- to 5'-direction to yield nucleoside 5'-phosphates.. Bidirectionally degrades single-stranded DNA into large acid-insoluble oligonucleotides, which are then degraded further into small acid-soluble oligonucleotides. The sequence is that of Exodeoxyribonuclease 7 large subunit from Acaryochloris marina (strain MBIC 11017).